Here is a 283-residue protein sequence, read N- to C-terminus: PTS system mannose-specific EIID component (283 aa).

At M1 the chain carries N-formylmethionine. Topologically, residues 1 to 14 are cytoplasmic; that stretch reads MVDTTQTTTEKKLT. Residues 11-281 enclose the PTS EIID domain; it reads KKLTQSDIRG…GIAGYACGLL (271 aa). The stretch at 15–52 is an intramembrane region; sequence QSDIRGVFLRSNLFQGSWNFERMQALGFCFSMVPAIRR. Over 53-59 the chain is Cytoplasmic; sequence LYPENNE. Residues 60–92 lie within the membrane without spanning it; that stretch reads ARKQAIRRHLEFFNTQPFVAAPILGVTLALEEQ. Residues 93–100 lie on the Cytoplasmic side of the membrane; sequence RANGAEID. The hydrophobic stretch at 101–140 threads the membrane; sequence DGAINGIKVGLMGPLAGVGDPIFWGTVRPVFAALGAGIAM. The Periplasmic portion of the chain corresponds to 141 to 144; it reads SGSL. The hydrophobic stretch at 145–173 threads the membrane; it reads LGPLLFFILFNLVRLATRYYGVAYGYSKG. At 174 to 183 the chain is on the cytoplasmic side; that stretch reads IDIVKDMGGG. A transmembrane helix spans residues 184–209; that stretch reads FLQKLTEGASILGLFVMGALVNKWTH. Over 210-241 the chain is Periplasmic; sequence VNIPLVVSRITDQTGKEHVTTVQTILDQLMPG. The hydrophobic stretch at 242 to 255 threads the membrane; the sequence is LVPLLLTFACMWLL. Over 256–261 the chain is Cytoplasmic; that stretch reads RKKVNP. Over 262 to 280 the chain traverses the membrane; it reads LWIIVGFFVIGIAGYACGL. Over 281–283 the chain is Periplasmic; it reads LGL.

As to quaternary structure, homotrimer of protomers that are composed of two subunits, IIC and IID.

It is found in the cell inner membrane. Functionally, the phosphoenolpyruvate-dependent sugar phosphotransferase system (sugar PTS), a major carbohydrate active transport system, catalyzes the phosphorylation of incoming sugar substrates concomitantly with their translocation across the cell membrane. The enzyme II ManXYZ PTS system is involved in mannose transport. In Escherichia coli O157:H7, this protein is PTS system mannose-specific EIID component (manZ).